A 299-amino-acid polypeptide reads, in one-letter code: MLFDQIASNKRKTWILLLVFFLLLALVGYAVGYLFIRSGLGGLVIALIIGFIYALSMIFQSTEIVMSMNGAREVDEQTAPDLYHVVEDMALVAQIPMPRVFIIDDPALNAFATGSNPQNAAVAATSGLLAIMNREELEAVMGHEVSHIRNYDIRISTIAVALASAITMLSSMAGRMMWWGGAGRRRSDDDRDGNGLEIIMLVVSLLAIVLAPLAATLVQLAISRQREFLADASSVELTRNPQGMINALDKLDNSKPMSRHVDDASSALYINDPKKGGGFQKLFYTHPPISERIERLKQM.

The next 2 membrane-spanning stretches (helical) occupy residues 15-35 (ILLL…GYLF) and 39-59 (GLGG…SMIF). Residue histidine 143 participates in Zn(2+) binding. Glutamate 144 is an active-site residue. Histidine 147 lines the Zn(2+) pocket. The next 2 helical transmembrane spans lie at 158-178 (IAVA…RMMW) and 198-218 (IIML…ATLV). Zn(2+) is bound at residue glutamate 227.

The protein belongs to the peptidase M48B family. Zn(2+) is required as a cofactor.

Its subcellular location is the cell membrane. The polypeptide is Protease HtpX homolog (Streptococcus pneumoniae serotype 4 (strain ATCC BAA-334 / TIGR4)).